The primary structure comprises 339 residues: MTDVPTSAPRSTSKSEFSHETVLLFETVAAVLGEKSLNDNTPKHDGIYVDATFGRGGHSKLLLNYLSDDAKLFVFDKDPEAIDVANDLAAEDKRVIVVHDSFADMTQCLNSRGVSQVDGIMADLGVSSPQLDDGSRGFSFMRDGAIDMRMDTSRGQPVGEWLQTVDEETLADVLYDFGEERHSRRIARAIKGMTQYTSTLELAEVIKQAHPKWQKGKHPATQSFQAMRIFINNELGDIDSFLAQSLTLLAPQGQLAVISFHSLEDRRIKQFLQRHSRGQYPEDENLPMPPQRPRYFSKPKRIAPSKAEVTVNNRSRSAWLRVATRTDTPYNTDPSPQHS.

S-adenosyl-L-methionine is bound by residues 56 to 58, D76, F102, D123, and Q130; that span reads GGH. 2 disordered regions span residues 274–309 and 320–339; these read RHSR…KAEV and LRVA…PQHS. The segment covering 325 to 339 has biased composition (polar residues); sequence RTDTPYNTDPSPQHS.

It belongs to the methyltransferase superfamily. RsmH family.

Its subcellular location is the cytoplasm. The catalysed reaction is cytidine(1402) in 16S rRNA + S-adenosyl-L-methionine = N(4)-methylcytidine(1402) in 16S rRNA + S-adenosyl-L-homocysteine + H(+). Functionally, specifically methylates the N4 position of cytidine in position 1402 (C1402) of 16S rRNA. This Psychrobacter sp. (strain PRwf-1) protein is Ribosomal RNA small subunit methyltransferase H.